Reading from the N-terminus, the 250-residue chain is Indole-3-glycerol phosphate synthase (250 aa).

This sequence belongs to the TrpC family.

The enzyme catalyses 1-(2-carboxyphenylamino)-1-deoxy-D-ribulose 5-phosphate + H(+) = (1S,2R)-1-C-(indol-3-yl)glycerol 3-phosphate + CO2 + H2O. Its pathway is amino-acid biosynthesis; L-tryptophan biosynthesis; L-tryptophan from chorismate: step 4/5. This Bacillus pumilus (strain SAFR-032) protein is Indole-3-glycerol phosphate synthase.